The following is a 626-amino-acid chain: SHC-transforming protein 4 (626 aa).

Residues 1-185 (MRERSQDSQA…KQDGPPLQHL (185 aa)) form a CH2 region. Disordered stretches follow at residues 38–76 (ITSL…TVSS) and 119–182 (LQEN…GPPL). Over residues 120–139 (QENQDQTPSRPASPESNLNR) the composition is skewed to polar residues. Residues 186 to 369 (LGNGLNYCVR…LVDGAPEDRD (184 aa)) form the PID domain. The interval 370 to 521 (HDYYNSIPGK…HIRQQLWDEE (152 aa)) is CH1. Position 422 is a phosphotyrosine (Y422). The 92-residue stretch at 522–613 (CFHGKLSRGA…GSEVRLKQPI (92 aa)) folds into the SH2 domain.

In terms of assembly, interacts (via PID domain) with phosphorylated MUSK (via NPXY motif); undergoes tyrosine phosphorylation downstream of activated MUSK. Interacts with GRB2; the interaction is dependent of Tyr-422 phosphorylation and increased by EGF. Post-translationally, phosphorylated; the phosphorylation is enhanced by EGF. Phosphorylation at Tyr-422 is required for the interaction with GRB2. In terms of tissue distribution, expressed in both brain and skeletal muscle; widely expressed in brain namely olfactory bulb, cortex, hippocampus, striatum, thalamus, and brain stem (at protein level). Only expressed in melanomas. Weakly expressed in normal melanocytes and benign nevi. Highly expressed at the transition from radial growth phase to vertical growth phase and metastatic melanomas, when tumor cells acquire migratory competence and invasive potential.

Its subcellular location is the postsynaptic cell membrane. Its function is as follows. Activates both Ras-dependent and Ras-independent migratory pathways in melanomas. Contributes to the early phases of agrin-induced tyrosine phosphorylation of CHRNB1. The chain is SHC-transforming protein 4 (Shc4) from Mus musculus (Mouse).